The sequence spans 668 residues: Hemocyanin subunit D (668 aa).

Residues 1-22 (MDTRVLRLTLALVALSGVLADS) form the signal peptide. Cu cation contacts are provided by H206, H210, and H236. Residue N322 is glycosylated (N-linked (GlcNAc...) asparagine). The Cu cation site is built by H357, H361, and H397. Cysteines 567 and 614 form a disulfide.

It belongs to the tyrosinase family. Hemocyanin subfamily. 36-chain polymer consisting of 6 hexamers, each of which includes 4 different chains, A, B, C and D. As to expression, hemolymph.

Its subcellular location is the secreted. The protein resides in the extracellular space. In terms of biological role, hemocyanins are copper-containing oxygen carriers occurring freely dissolved in the hemolymph of many mollusks and arthropods. This Scutigera coleoptrata (House centipede) protein is Hemocyanin subunit D (HCD).